The primary structure comprises 486 residues: Glutamyl-tRNA(Gln) amidotransferase subunit A (486 aa).

Residues Lys-75 and Ser-150 each act as charge relay system in the active site. Residue Ser-174 is the Acyl-ester intermediate of the active site.

This sequence belongs to the amidase family. GatA subfamily. In terms of assembly, heterotrimer of A, B and C subunits.

The enzyme catalyses L-glutamyl-tRNA(Gln) + L-glutamine + ATP + H2O = L-glutaminyl-tRNA(Gln) + L-glutamate + ADP + phosphate + H(+). Allows the formation of correctly charged Gln-tRNA(Gln) through the transamidation of misacylated Glu-tRNA(Gln) in organisms which lack glutaminyl-tRNA synthetase. The reaction takes place in the presence of glutamine and ATP through an activated gamma-phospho-Glu-tRNA(Gln). The polypeptide is Glutamyl-tRNA(Gln) amidotransferase subunit A (Trichormus variabilis (strain ATCC 29413 / PCC 7937) (Anabaena variabilis)).